The primary structure comprises 820 residues: Phenylalanine--tRNA ligase beta subunit (820 aa).

Positions 42–154 constitute a tRNA-binding domain; that stretch reads KGGLEGLVIG…EDAVPGTLAK (113 aa). One can recognise a B5 domain in the interval 413 to 489; it reads AQDFIVELTY…RIYGYNNVEI (77 aa). The Mg(2+) site is built by Asp467, Asp473, Glu476, and Asp477. The FDX-ACB domain maps to 727-820; it reads SKFPAVKRDL…LEDKLGAKLR (94 aa).

The protein belongs to the phenylalanyl-tRNA synthetase beta subunit family. Type 1 subfamily. In terms of assembly, tetramer of two alpha and two beta subunits. Requires Mg(2+) as cofactor.

It localises to the cytoplasm. The catalysed reaction is tRNA(Phe) + L-phenylalanine + ATP = L-phenylalanyl-tRNA(Phe) + AMP + diphosphate + H(+). This chain is Phenylalanine--tRNA ligase beta subunit, found in Bacteroides fragilis (strain YCH46).